Reading from the N-terminus, the 70-residue chain is Protein SlyX homolog (70 aa).

It belongs to the SlyX family.

The sequence is that of Protein SlyX homolog from Shewanella loihica (strain ATCC BAA-1088 / PV-4).